A 948-amino-acid polypeptide reads, in one-letter code: RNA polymerase-associated protein RapA (948 aa).

The Helicase ATP-binding domain occupies 164-332 (EVADRSAPRV…FARLRLLDPN (169 aa)). Position 177–184 (177–184 (DEVGLGKT)) interacts with ATP. Positions 278 to 281 (DEAH) match the DEAH box motif. Positions 473–627 (RVDWLIDTLK…TCPTGNALQH (155 aa)) constitute a Helicase C-terminal domain.

It belongs to the SNF2/RAD54 helicase family. RapA subfamily. Interacts with the RNAP. Has a higher affinity for the core RNAP than for the holoenzyme. Its ATPase activity is stimulated by binding to RNAP.

In terms of biological role, transcription regulator that activates transcription by stimulating RNA polymerase (RNAP) recycling in case of stress conditions such as supercoiled DNA or high salt concentrations. Probably acts by releasing the RNAP, when it is trapped or immobilized on tightly supercoiled DNA. Does not activate transcription on linear DNA. Probably not involved in DNA repair. The protein is RNA polymerase-associated protein RapA of Pseudomonas putida (strain GB-1).